A 162-amino-acid polypeptide reads, in one-letter code: Phosphopantetheine adenylyltransferase (162 aa).

Residue Ser-11 participates in substrate binding. Residues 11-12 (SF) and His-19 each bind ATP. The substrate site is built by Lys-43, Thr-75, and Arg-89. ATP contacts are provided by residues 90 to 92 (GLR), Glu-100, and 125 to 131 (YAFLSSS).

It belongs to the bacterial CoaD family. Homohexamer. Requires Mg(2+) as cofactor.

The protein localises to the cytoplasm. It catalyses the reaction (R)-4'-phosphopantetheine + ATP + H(+) = 3'-dephospho-CoA + diphosphate. The protein operates within cofactor biosynthesis; coenzyme A biosynthesis; CoA from (R)-pantothenate: step 4/5. Reversibly transfers an adenylyl group from ATP to 4'-phosphopantetheine, yielding dephospho-CoA (dPCoA) and pyrophosphate. This chain is Phosphopantetheine adenylyltransferase, found in Finegoldia magna (strain ATCC 29328 / DSM 20472 / WAL 2508) (Peptostreptococcus magnus).